The primary structure comprises 348 residues: Actin maturation protease (348 aa).

The segment covering 1 to 18 has biased composition (pro residues); it reads MISPCSPPLEPPVPPPET. A disordered region spans residues 1–64; it reads MISPCSPPLE…LPPPPRTTGF (64 aa). The segment covering 34 to 48 has biased composition (low complexity); it reads NLPELAFPPSSFQAS. Positions 49–60 are enriched in pro residues; the sequence is VPPPPPLPPPPR. The interval 121 to 241 is peptidase C39-like; that stretch reads SLIQEGPQCG…WAVSAGVLLG (121 aa). Residue Cys129 is part of the active site. Ser313 carries the post-translational modification Phosphoserine.

It belongs to the ACTMAP family. Interacts (via N-terminus) with PFN2; the interaction may facilitate efficient cleavage of the acetylated N-terminus of immature actin. Interacts with PFN1.

The protein resides in the cytoplasm. It catalyses the reaction N-terminal N(alpha)-acetyl-L-methionyl-L-aspartyl-[protein] + H2O = N-terminal L-aspartyl-[protein] + N-acetyl-L-methionine. It carries out the reaction N-terminal N(alpha)-acetyl-L-methionyl-L-glutamyl-[protein] + H2O = N-terminal L-glutamyl-[protein] + N-acetyl-L-methionine. The enzyme catalyses N-terminal N(alpha)-acetyl-L-cysteinyl-L-aspartyl-[protein] + H2O = N-terminal L-aspartyl-[protein] + N-acetyl-L-cysteine. The catalysed reaction is N-terminal N(alpha)-acetyl-L-cysteinyl-L-glutamyl-[protein] + H2O = N-terminal L-glutamyl-[protein] + N-acetyl-L-cysteine. In terms of biological role, actin maturation protease that specifically mediates the cleavage of immature acetylated N-terminal actin, thereby contributing to actin maturation. Cleaves N-terminal acetylated methionine of immature cytoplasmic beta- and gamma-actins ACTB and ACTG1 after translation. Cleaves N-terminal acetylated cysteine of muscle alpha-actins ACTA1, ACTC1 and ACTA2 after canonical removal of N-terminal methionine. The polypeptide is Actin maturation protease (Bos taurus (Bovine)).